Reading from the N-terminus, the 254-residue chain is Ubiquinone biosynthesis O-methyltransferase (254 aa).

Residues arginine 47, glycine 76, aspartate 97, and leucine 141 each contribute to the S-adenosyl-L-methionine site.

It belongs to the methyltransferase superfamily. UbiG/COQ3 family.

It carries out the reaction a 3-demethylubiquinol + S-adenosyl-L-methionine = a ubiquinol + S-adenosyl-L-homocysteine + H(+). The enzyme catalyses a 3-(all-trans-polyprenyl)benzene-1,2-diol + S-adenosyl-L-methionine = a 2-methoxy-6-(all-trans-polyprenyl)phenol + S-adenosyl-L-homocysteine + H(+). Its pathway is cofactor biosynthesis; ubiquinone biosynthesis. Functionally, O-methyltransferase that catalyzes the 2 O-methylation steps in the ubiquinone biosynthetic pathway. The polypeptide is Ubiquinone biosynthesis O-methyltransferase (Maricaulis maris (strain MCS10) (Caulobacter maris)).